Reading from the N-terminus, the 37-residue chain is MKIRASVRKICEKCRLIRRRGRIIVICYNPKHKQRQG.

This sequence belongs to the bacterial ribosomal protein bL36 family.

Its subcellular location is the plastid. The protein localises to the chloroplast. The polypeptide is Large ribosomal subunit protein bL36c (Acorus calamus (Sweet flag)).